The following is a 261-amino-acid chain: Carbonic anhydrase 1 (261 aa).

An N-acetylalanine modification is found at alanine 2. The 258-residue stretch at 4–261 (SDWGYDSPNG…LKGRTVRAFF (258 aa)) folds into the Alpha-carbonic anhydrase domain. The Proton donor/acceptor role is filled by histidine 65. Histidine 95, histidine 97, and histidine 120 together coordinate Zn(2+). Substrate contacts are provided by residues threonine 200 and 200-201 (TH).

It belongs to the alpha-carbonic anhydrase family. It depends on Zn(2+) as a cofactor.

The protein localises to the cytoplasm. It catalyses the reaction hydrogencarbonate + H(+) = CO2 + H2O. The catalysed reaction is urea = cyanamide + H2O. Its activity is regulated as follows. Inhibited by acetazolamide. Its function is as follows. Catalyzes the reversible hydration of carbon dioxide. Can hydrate cyanamide to urea. The protein is Carbonic anhydrase 1 (CA1) of Equus caballus (Horse).